The sequence spans 552 residues: MANIVVSGEQLQEAFREVAAMVDSTVGATAGPRGNTIGISKPYGGPEVTKDGYKVMKGIKPEKPLHSAIVSTIAQSASQCNDKVGDGTTTCSILTSNMIMEASKSIAAGNDRICIKNGIQKAKDVILKEITSMSRTISLEKMDEVAQVAIISANGDKDIGNSIADAVKKVGKEGVITVEESKGSKELEVELTTGMQFDRGYLSPYFVTNNEKMSVELDDPYLLITEKKLNIIQPLLPILEAIFKSGKPLFIIAEDVEGEALSTLVINKLRGLKVAAVKAPGFGDRRKEMLEDIAALTGAKYVIKDELGIKMEDLTLEDLGTAKNVKITKDNTTIVSEDSDCDKQNRVNARINQIKSQIETSTSDYDKEKLRERLAKLSGGVAVLKVGGATEVEVKERRDRVEDALHATRAAIEEGIVPGGGVALLYAASALDKLKASSDEEQIGINIVKKVLSAPIKRLVKNAGLESAVIIDYLIKQNDKELIYNVEAMNYANASTAGVIDPAKVVRIAFETAVSVASALITTESMIVDLPNKEENASSPMGAGAMGGMGGF.

Residues Thr-29–Pro-32, Lys-50, Asp-86–Thr-90, Gly-420, and Asp-501 each bind ATP.

The protein belongs to the chaperonin (HSP60) family. In terms of assembly, forms a cylinder of 14 subunits composed of two heptameric rings stacked back-to-back. Interacts with the co-chaperonin GroES.

It localises to the cytoplasm. It carries out the reaction ATP + H2O + a folded polypeptide = ADP + phosphate + an unfolded polypeptide.. Its function is as follows. Together with its co-chaperonin GroES, plays an essential role in assisting protein folding. The GroEL-GroES system forms a nano-cage that allows encapsulation of the non-native substrate proteins and provides a physical environment optimized to promote and accelerate protein folding. The sequence is that of Chaperonin GroEL from Wolbachia pipientis subsp. Culex pipiens (strain wPip).